The following is a 188-amino-acid chain: Ribosome maturation factor RimM (188 aa).

Residues 98 to 174 enclose the PRC barrel domain; sequence EGTFYYHDLR…HLTADAPAGL (77 aa). Residues 169-188 are disordered; that stretch reads DAPAGLIGPEPGEEDGAAES. Residues 179–188 are compositionally biased toward acidic residues; the sequence is PGEEDGAAES.

It belongs to the RimM family. As to quaternary structure, binds ribosomal protein uS19.

The protein resides in the cytoplasm. Its function is as follows. An accessory protein needed during the final step in the assembly of 30S ribosomal subunit, possibly for assembly of the head region. Essential for efficient processing of 16S rRNA. May be needed both before and after RbfA during the maturation of 16S rRNA. It has affinity for free ribosomal 30S subunits but not for 70S ribosomes. The polypeptide is Ribosome maturation factor RimM (Deinococcus radiodurans (strain ATCC 13939 / DSM 20539 / JCM 16871 / CCUG 27074 / LMG 4051 / NBRC 15346 / NCIMB 9279 / VKM B-1422 / R1)).